Reading from the N-terminus, the 286-residue chain is ATP synthase gamma chain (286 aa).

This sequence belongs to the ATPase gamma chain family. F-type ATPases have 2 components, CF(1) - the catalytic core - and CF(0) - the membrane proton channel. CF(1) has five subunits: alpha(3), beta(3), gamma(1), delta(1), epsilon(1). CF(0) has three main subunits: a, b and c.

The protein localises to the cell inner membrane. Functionally, produces ATP from ADP in the presence of a proton gradient across the membrane. The gamma chain is believed to be important in regulating ATPase activity and the flow of protons through the CF(0) complex. This chain is ATP synthase gamma chain, found in Pseudomonas putida (strain ATCC 700007 / DSM 6899 / JCM 31910 / BCRC 17059 / LMG 24140 / F1).